The sequence spans 1728 residues: U3 small nucleolar RNA-associated protein 10 (1728 aa).

7 HEAT repeats span residues 540–578 (DKDF…LVKE), 881–926 (PANH…MMPA), 986–1024 (FMGS…AYEH), 1191–1229 (LLSI…SEST), 1235–1274 (REAL…KYGK), 1622–1662 (ADAT…GQAA), and 1683–1721 (LQAL…KLGE).

It belongs to the HEATR1/UTP10 family. Component of the ribosomal small subunit (SSU) processome.

The protein localises to the nucleus. The protein resides in the nucleolus. Functionally, involved in nucleolar processing of pre-18S ribosomal RNA. Involved in ribosome biosynthesis. This chain is U3 small nucleolar RNA-associated protein 10, found in Chaetomium globosum (strain ATCC 6205 / CBS 148.51 / DSM 1962 / NBRC 6347 / NRRL 1970) (Soil fungus).